Consider the following 199-residue polypeptide: UPF0301 protein Vapar_4617 (199 aa).

Belongs to the UPF0301 (AlgH) family.

In Variovorax paradoxus (strain S110), this protein is UPF0301 protein Vapar_4617.